The chain runs to 200 residues: MSVIPYVIEQTGRGERMYDIYSRLLKDRIIFVGTPIESQMANTIVAQLLLLDSQNPDQEIQMYINCPGGEVYAGLAIYDTMRYIKAPVSTICVGIAMSMGSVLLMAGDKGKRLALPNSRIMIHQGSAGFRGNTPDLEVQAKEVLRLRDTLIDIYHRHTNLPHEKLLRDMERDYFMSPYEAQQYGLIDSVIEHTRQPEAAL.

S98 acts as the Nucleophile in catalysis. H123 is a catalytic residue.

Belongs to the peptidase S14 family. As to quaternary structure, fourteen ClpP subunits assemble into 2 heptameric rings which stack back to back to give a disk-like structure with a central cavity, resembling the structure of eukaryotic proteasomes.

The protein localises to the cytoplasm. It catalyses the reaction Hydrolysis of proteins to small peptides in the presence of ATP and magnesium. alpha-casein is the usual test substrate. In the absence of ATP, only oligopeptides shorter than five residues are hydrolyzed (such as succinyl-Leu-Tyr-|-NHMec, and Leu-Tyr-Leu-|-Tyr-Trp, in which cleavage of the -Tyr-|-Leu- and -Tyr-|-Trp bonds also occurs).. Cleaves peptides in various proteins in a process that requires ATP hydrolysis. Has a chymotrypsin-like activity. Plays a major role in the degradation of misfolded proteins. This Deinococcus geothermalis (strain DSM 11300 / CIP 105573 / AG-3a) protein is ATP-dependent Clp protease proteolytic subunit.